The sequence spans 431 residues: Glucose-1-phosphate adenylyltransferase (431 aa).

Alpha-D-glucose 1-phosphate contacts are provided by residues glycine 163, 178–179 (EK), and serine 210.

It belongs to the bacterial/plant glucose-1-phosphate adenylyltransferase family. Homotetramer.

The catalysed reaction is alpha-D-glucose 1-phosphate + ATP + H(+) = ADP-alpha-D-glucose + diphosphate. It functions in the pathway glycan biosynthesis; glycogen biosynthesis. Its function is as follows. Involved in the biosynthesis of ADP-glucose, a building block required for the elongation reactions to produce glycogen. Catalyzes the reaction between ATP and alpha-D-glucose 1-phosphate (G1P) to produce pyrophosphate and ADP-Glc. The chain is Glucose-1-phosphate adenylyltransferase from Synechococcus sp. (strain WH7803).